The following is a 203-amino-acid chain: Twist-related protein 1 (203 aa).

Low complexity predominate over residues 1-18 (MMQDVSSSPVSPADDSLS). The disordered stretch occupies residues 1–105 (MMQDVSSSPV…SGGGSPQSYE (105 aa)). The segment covering 34 to 43 (RGGRKRRSSR) has biased composition (basic residues). Composition is skewed to gly residues over residues 46 to 65 (AGGGAGPGGAAGGGVGGGDE) and 80 to 100 (GCGGGGGSAGGGGGSSSGGGS). The bHLH domain maps to 109–160 (TQRVMANVRGRQRTQSLNEAFAALRKIIPTLPSDKLSKIQTLKLAARYIDFL). The interval 162–192 (QVLQSDELDSKMASCSYVAHERLSYAFSVWR) is sufficient for transactivation activity.

In terms of assembly, efficient DNA binding requires dimerization with another bHLH protein. Homodimer or heterodimer with E proteins such as TCF3. ID1 binds preferentially to TCF3 but does not interact efficiently with TWIST1 so ID1 levels control the amount of TCF3 available to dimerize with TWIST and thus determine the type of dimer formed.

The protein localises to the nucleus. Its function is as follows. Acts as a transcriptional regulator. Inhibits myogenesis by sequestrating E proteins, inhibiting trans-activation by MEF2, and inhibiting DNA-binding by MYOD1 through physical interaction. This interaction probably involves the basic domains of both proteins. Also represses expression of pro-inflammatory cytokines such as TNFA and IL1B. Regulates cranial suture patterning and fusion. Activates transcription as a heterodimer with E proteins. Regulates gene expression differentially, depending on dimer composition. Homodimers induce expression of FGFR2 and POSTN while heterodimers repress FGFR2 and POSTN expression and induce THBS1 expression. Heterodimerization is also required for osteoblast differentiation. Represses the activity of the circadian transcriptional activator: NPAS2-BMAL1 heterodimer. The protein is Twist-related protein 1 (TWIST1) of Callithrix jacchus (White-tufted-ear marmoset).